The chain runs to 487 residues: Bifunctional protein GlmU (487 aa).

Residues M1 to R235 are pyrophosphorylase. Residues L13–G16, K27, Q82, G87–T88, S110–D112, G147, E162, N177, and N233 each bind UDP-N-acetyl-alpha-D-glucosamine. D112 contributes to the Mg(2+) binding site. N233 serves as a coordination point for Mg(2+). Positions E236–S256 are linker. The tract at residues G257–S487 is N-acetyltransferase. UDP-N-acetyl-alpha-D-glucosamine is bound by residues R339 and K357. The active-site Proton acceptor is H369. UDP-N-acetyl-alpha-D-glucosamine is bound by residues Y372 and N383. Acetyl-CoA contacts are provided by residues A386, N392–Y393, S411, A429, and R446. Positions E453–S487 are disordered. The segment covering A468 to P481 has biased composition (low complexity).

This sequence in the N-terminal section; belongs to the N-acetylglucosamine-1-phosphate uridyltransferase family. It in the C-terminal section; belongs to the transferase hexapeptide repeat family. As to quaternary structure, homotrimer. Mg(2+) is required as a cofactor.

The protein localises to the cytoplasm. It carries out the reaction alpha-D-glucosamine 1-phosphate + acetyl-CoA = N-acetyl-alpha-D-glucosamine 1-phosphate + CoA + H(+). It catalyses the reaction N-acetyl-alpha-D-glucosamine 1-phosphate + UTP + H(+) = UDP-N-acetyl-alpha-D-glucosamine + diphosphate. The protein operates within nucleotide-sugar biosynthesis; UDP-N-acetyl-alpha-D-glucosamine biosynthesis; N-acetyl-alpha-D-glucosamine 1-phosphate from alpha-D-glucosamine 6-phosphate (route II): step 2/2. It participates in nucleotide-sugar biosynthesis; UDP-N-acetyl-alpha-D-glucosamine biosynthesis; UDP-N-acetyl-alpha-D-glucosamine from N-acetyl-alpha-D-glucosamine 1-phosphate: step 1/1. Its pathway is bacterial outer membrane biogenesis; LPS lipid A biosynthesis. Its function is as follows. Catalyzes the last two sequential reactions in the de novo biosynthetic pathway for UDP-N-acetylglucosamine (UDP-GlcNAc). The C-terminal domain catalyzes the transfer of acetyl group from acetyl coenzyme A to glucosamine-1-phosphate (GlcN-1-P) to produce N-acetylglucosamine-1-phosphate (GlcNAc-1-P), which is converted into UDP-GlcNAc by the transfer of uridine 5-monophosphate (from uridine 5-triphosphate), a reaction catalyzed by the N-terminal domain. This is Bifunctional protein GlmU from Anaeromyxobacter sp. (strain Fw109-5).